Here is a 90-residue protein sequence, read N- to C-terminus: Acylphosphatase (90 aa).

An Acylphosphatase-like domain is found at 3–90; it reads AIEVDVFGLV…FETNDFAIRG (88 aa). Active-site residues include R18 and N36.

The protein belongs to the acylphosphatase family.

The catalysed reaction is an acyl phosphate + H2O = a carboxylate + phosphate + H(+). The chain is Acylphosphatase (acyP) from Leuconostoc mesenteroides subsp. mesenteroides (strain ATCC 8293 / DSM 20343 / BCRC 11652 / CCM 1803 / JCM 6124 / NCDO 523 / NBRC 100496 / NCIMB 8023 / NCTC 12954 / NRRL B-1118 / 37Y).